The following is a 380-amino-acid chain: Kappa-type opioid receptor (380 aa).

Topologically, residues 1–57 are extracellular; sequence MESPIQIFRGEPGPTCAPSACLLPNSSSWFPNWAESDSNGSVGSEDQQLEPAHISPA. N-linked (GlcNAc...) asparagine glycosylation is found at N25 and N39. The chain crosses the membrane as a helical span at residues 58-85; sequence IPVIITAVYSVVFVVGLVGNSLVMFVII. At 86–95 the chain is on the cytoplasmic side; the sequence is RYTKMKTATN. A helical transmembrane segment spans residues 96-119; that stretch reads IYIFNLALADALVTTTMPFQSAVY. The Extracellular segment spans residues 120–132; sequence LMNSWPFGDVLCK. C131 and C210 are joined by a disulfide. A helical transmembrane segment spans residues 133 to 154; sequence IVISIDYYNMFTSIFTLTMMSV. At 155–173 the chain is on the cytoplasmic side; that stretch reads DRYIAVCHPVKALDFRTPL. The chain crosses the membrane as a helical span at residues 174-196; it reads KAKIINICIWLLASSVGISAIVL. The Extracellular portion of the chain corresponds to 197–222; it reads GGTKVREDVDVIECSLQFPDDEYSWW. Residues 223–247 traverse the membrane as a helical segment; it reads DLFMKICVFVFAFVIPVLIIIVCYT. The Cytoplasmic segment spans residues 248 to 274; that stretch reads LMILRLKSVRLLSGSREKDRNLRRITK. Residues 275 to 296 traverse the membrane as a helical segment; the sequence is LVLVVVAVFIICWTPIHIFILV. Residues 297–311 lie on the Extracellular side of the membrane; the sequence is EALGSTSHSTAVLSS. Residues 312-333 traverse the membrane as a helical segment; it reads YYFCIALGYTNSSLNPVLYAFL. The Cytoplasmic portion of the chain corresponds to 334-380; that stretch reads DENFKRCFRDFCFPIKMRMERQSTNRVRNTVQDPASMRDVGGMNKPV. A lipid anchor (S-palmitoyl cysteine) is attached at C345.

This sequence belongs to the G-protein coupled receptor 1 family. In terms of assembly, interacts with NHERF1. Interacts with GABARAPL1.

It localises to the cell membrane. Its function is as follows. G-protein coupled opioid receptor that functions as a receptor for endogenous alpha-neoendorphins and dynorphins, but has low affinity for beta-endorphins. Also functions as a receptor for various synthetic opioids and for the psychoactive diterpene salvinorin A. Ligand binding causes a conformation change that triggers signaling via guanine nucleotide-binding proteins (G proteins) and modulates the activity of down-stream effectors, such as adenylate cyclase. Signaling leads to the inhibition of adenylate cyclase activity. Inhibits neurotransmitter release by reducing calcium ion currents and increasing potassium ion conductance. Plays a role in the perception of pain. Plays a role in mediating reduced physical activity upon treatment with synthetic opioids. Plays a role in the regulation of salivation in response to synthetic opioids. May play a role in arousal and regulation of autonomic and neuroendocrine functions. The polypeptide is Kappa-type opioid receptor (Oprk1) (Rattus norvegicus (Rat)).